The following is a 214-amino-acid chain: 7-cyano-7-deazaguanine synthase (214 aa).

10-20 provides a ligand contact to ATP; sequence FSGGQDSTTCL. Zn(2+) is bound by residues Cys-184, Cys-193, Cys-196, and Cys-199.

Belongs to the QueC family. As to quaternary structure, homodimer. Zn(2+) is required as a cofactor.

It catalyses the reaction 7-carboxy-7-deazaguanine + NH4(+) + ATP = 7-cyano-7-deazaguanine + ADP + phosphate + H2O + H(+). It participates in purine metabolism; 7-cyano-7-deazaguanine biosynthesis. Its function is as follows. Catalyzes the ATP-dependent conversion of 7-carboxy-7-deazaguanine (CDG) to 7-cyano-7-deazaguanine (preQ(0)). This chain is 7-cyano-7-deazaguanine synthase, found in Exiguobacterium sp. (strain ATCC BAA-1283 / AT1b).